The sequence spans 951 residues: Valine--tRNA ligase (951 aa).

Positions 42–52 (PNVTGSLHMGH) match the 'HIGH' region motif. Positions 554–558 (KMSKS) match the 'KMSKS' region motif. Lys-557 contributes to the ATP binding site. Residues 880–914 (AGLIDKAAELDRLAKEVAKLEAEIGRIESKLSNEG) are a coiled coil.

The protein belongs to the class-I aminoacyl-tRNA synthetase family. ValS type 1 subfamily. In terms of assembly, monomer.

The protein resides in the cytoplasm. It catalyses the reaction tRNA(Val) + L-valine + ATP = L-valyl-tRNA(Val) + AMP + diphosphate. Catalyzes the attachment of valine to tRNA(Val). As ValRS can inadvertently accommodate and process structurally similar amino acids such as threonine, to avoid such errors, it has a 'posttransfer' editing activity that hydrolyzes mischarged Thr-tRNA(Val) in a tRNA-dependent manner. This is Valine--tRNA ligase from Pectobacterium atrosepticum (strain SCRI 1043 / ATCC BAA-672) (Erwinia carotovora subsp. atroseptica).